A 452-amino-acid chain; its full sequence is Bifunctional protein GlmU (452 aa).

A pyrophosphorylase region spans residues 1-218 (MKVLILAAGL…IVEVSGVNDR (218 aa)). UDP-N-acetyl-alpha-D-glucosamine is bound by residues 6–9 (LAAG), Lys-20, Gln-68, 73–74 (GT), 95–97 (YGD), Gly-134, Glu-147, Asn-162, and Asn-216. Asp-97 lines the Mg(2+) pocket. Position 216 (Asn-216) interacts with Mg(2+). The segment at 219–239 (IQLAQLETIAKQRILEKLMLS) is linker. Positions 240–452 (GVTIVDPNST…EELKNADHKE (213 aa)) are N-acetyltransferase. The UDP-N-acetyl-alpha-D-glucosamine site is built by Arg-321 and Lys-339. The Proton acceptor role is filled by His-351. Residues Tyr-354 and Asn-365 each coordinate UDP-N-acetyl-alpha-D-glucosamine. Residues Ala-368, 374-375 (NY), Ser-393, Ala-411, and Arg-428 each bind acetyl-CoA.

The protein in the N-terminal section; belongs to the N-acetylglucosamine-1-phosphate uridyltransferase family. In the C-terminal section; belongs to the transferase hexapeptide repeat family. In terms of assembly, homotrimer. It depends on Mg(2+) as a cofactor.

It localises to the cytoplasm. The catalysed reaction is alpha-D-glucosamine 1-phosphate + acetyl-CoA = N-acetyl-alpha-D-glucosamine 1-phosphate + CoA + H(+). The enzyme catalyses N-acetyl-alpha-D-glucosamine 1-phosphate + UTP + H(+) = UDP-N-acetyl-alpha-D-glucosamine + diphosphate. It functions in the pathway nucleotide-sugar biosynthesis; UDP-N-acetyl-alpha-D-glucosamine biosynthesis; N-acetyl-alpha-D-glucosamine 1-phosphate from alpha-D-glucosamine 6-phosphate (route II): step 2/2. It participates in nucleotide-sugar biosynthesis; UDP-N-acetyl-alpha-D-glucosamine biosynthesis; UDP-N-acetyl-alpha-D-glucosamine from N-acetyl-alpha-D-glucosamine 1-phosphate: step 1/1. Its pathway is bacterial outer membrane biogenesis; LPS lipid A biosynthesis. In terms of biological role, catalyzes the last two sequential reactions in the de novo biosynthetic pathway for UDP-N-acetylglucosamine (UDP-GlcNAc). The C-terminal domain catalyzes the transfer of acetyl group from acetyl coenzyme A to glucosamine-1-phosphate (GlcN-1-P) to produce N-acetylglucosamine-1-phosphate (GlcNAc-1-P), which is converted into UDP-GlcNAc by the transfer of uridine 5-monophosphate (from uridine 5-triphosphate), a reaction catalyzed by the N-terminal domain. This chain is Bifunctional protein GlmU, found in Fervidobacterium nodosum (strain ATCC 35602 / DSM 5306 / Rt17-B1).